The chain runs to 165 residues: Myosin regulatory light chain 2B, cardiac muscle isoform (165 aa).

The residue at position 2 (Ala-2) is a N,N,N-trimethylalanine. 3 EF-hand domains span residues 23 to 58 (TQIQ…LGRL), 93 to 128 (DPEE…QEGR), and 129 to 164 (FSQE…GEEK). Residues Asp-36, Asn-38, Asp-40, and Asp-47 each coordinate Ca(2+).

As to quaternary structure, myosin is a hexamer of 2 heavy chains and 4 light chains. In terms of processing, the N-terminus is blocked. N,N,N-trimethylalanine, found in other myosin light chains would not have been detected in the N-terminal tryptic peptide in PubMed:7319048 because it would remain trimethylated and ninhydrin negative after hydrolysis.

This chain is Myosin regulatory light chain 2B, cardiac muscle isoform, found in Gallus gallus (Chicken).